Here is a 435-residue protein sequence, read N- to C-terminus: Glutamate-1-semialdehyde 2,1-aminomutase (435 aa).

K269 is subject to N6-(pyridoxal phosphate)lysine.

The protein belongs to the class-III pyridoxal-phosphate-dependent aminotransferase family. HemL subfamily. As to quaternary structure, homodimer. Pyridoxal 5'-phosphate is required as a cofactor.

The protein localises to the cytoplasm. The catalysed reaction is (S)-4-amino-5-oxopentanoate = 5-aminolevulinate. It functions in the pathway porphyrin-containing compound metabolism; protoporphyrin-IX biosynthesis; 5-aminolevulinate from L-glutamyl-tRNA(Glu): step 2/2. The chain is Glutamate-1-semialdehyde 2,1-aminomutase from Gemmatimonas aurantiaca (strain DSM 14586 / JCM 11422 / NBRC 100505 / T-27).